The primary structure comprises 152 residues: 6,7-dimethyl-8-ribityllumazine synthase (152 aa).

5-amino-6-(D-ribitylamino)uracil-binding positions include Phe21, 55–57 (AFE), and 79–81 (AVI). 84–85 (AT) contacts (2S)-2-hydroxy-3-oxobutyl phosphate. His87 serves as the catalytic Proton donor. Phe112 contributes to the 5-amino-6-(D-ribitylamino)uracil binding site. (2S)-2-hydroxy-3-oxobutyl phosphate is bound at residue Arg126.

Belongs to the DMRL synthase family. As to quaternary structure, forms an icosahedral capsid composed of 60 subunits, arranged as a dodecamer of pentamers.

The enzyme catalyses (2S)-2-hydroxy-3-oxobutyl phosphate + 5-amino-6-(D-ribitylamino)uracil = 6,7-dimethyl-8-(1-D-ribityl)lumazine + phosphate + 2 H2O + H(+). It functions in the pathway cofactor biosynthesis; riboflavin biosynthesis; riboflavin from 2-hydroxy-3-oxobutyl phosphate and 5-amino-6-(D-ribitylamino)uracil: step 1/2. Catalyzes the formation of 6,7-dimethyl-8-ribityllumazine by condensation of 5-amino-6-(D-ribitylamino)uracil with 3,4-dihydroxy-2-butanone 4-phosphate. This is the penultimate step in the biosynthesis of riboflavin. The chain is 6,7-dimethyl-8-ribityllumazine synthase from Exiguobacterium sibiricum (strain DSM 17290 / CCUG 55495 / CIP 109462 / JCM 13490 / 255-15).